Here is a 93-residue protein sequence, read N- to C-terminus: Aspartyl/glutamyl-tRNA(Asn/Gln) amidotransferase subunit C (93 aa).

The protein belongs to the GatC family. In terms of assembly, heterotrimer of A, B and C subunits.

It catalyses the reaction L-glutamyl-tRNA(Gln) + L-glutamine + ATP + H2O = L-glutaminyl-tRNA(Gln) + L-glutamate + ADP + phosphate + H(+). The enzyme catalyses L-aspartyl-tRNA(Asn) + L-glutamine + ATP + H2O = L-asparaginyl-tRNA(Asn) + L-glutamate + ADP + phosphate + 2 H(+). Allows the formation of correctly charged Asn-tRNA(Asn) or Gln-tRNA(Gln) through the transamidation of misacylated Asp-tRNA(Asn) or Glu-tRNA(Gln) in organisms which lack either or both of asparaginyl-tRNA or glutaminyl-tRNA synthetases. The reaction takes place in the presence of glutamine and ATP through an activated phospho-Asp-tRNA(Asn) or phospho-Glu-tRNA(Gln). The sequence is that of Aspartyl/glutamyl-tRNA(Asn/Gln) amidotransferase subunit C from Methanothrix thermoacetophila (strain DSM 6194 / JCM 14653 / NBRC 101360 / PT) (Methanosaeta thermophila).